The following is a 490-amino-acid chain: Probable cytosol aminopeptidase (490 aa).

Residues Lys-257 and Asp-262 each coordinate Mn(2+). Lys-269 is an active-site residue. The Mn(2+) site is built by Asp-281, Asp-341, and Glu-343. Arg-345 is a catalytic residue.

It belongs to the peptidase M17 family. It depends on Mn(2+) as a cofactor.

It is found in the cytoplasm. It catalyses the reaction Release of an N-terminal amino acid, Xaa-|-Yaa-, in which Xaa is preferably Leu, but may be other amino acids including Pro although not Arg or Lys, and Yaa may be Pro. Amino acid amides and methyl esters are also readily hydrolyzed, but rates on arylamides are exceedingly low.. The catalysed reaction is Release of an N-terminal amino acid, preferentially leucine, but not glutamic or aspartic acids.. In terms of biological role, presumably involved in the processing and regular turnover of intracellular proteins. Catalyzes the removal of unsubstituted N-terminal amino acids from various peptides. This is Probable cytosol aminopeptidase from Prochlorococcus marinus (strain MIT 9215).